We begin with the raw amino-acid sequence, 622 residues long: MSTDNKQSLPAITLAAIGVVYGDIGTSPLYTLRECLSGQFGFGVERDAVFGFLSLIFWLLIFVVSIKYLTFVMRADNAGEGGILTLMSLAGRNTSARTTSMLVIMGLIGGSFFYGEVVITPAISVMSAIEGLEIVAPQLDTWIVPLSIIVLTLLFMIQKHGTGMVGKLFAPIMLTWFLILAVLGLRSIIANPEVLHALNPVWAVRFFLEYKTVSFIALGAVVLSITGVEALYADMGHFGKFPIRLAWFTVVLPSLVLNYFGQGALLLKHPEAIKNPFFLLAPDWALIPLLILAALATVIASQAVISGVFSLTRQAVRLGYLSPMRIIHTSEMESGQIYIPFVNWLLYFAVVVVIVSFEHSSNLAAAYGIAVTGTMVLTSILSTTVARKNWHWNKYFVALILIAFLCVDIPLFSANLDKLLSGGWLPLSLGLIMFTIMTTWKSERFRLLRRMHEHGNSLEAMIASLEKSPPVRVPGTAVYMSRALSVIPFALLHNLKHNKVLHERVILLTLRTEDAPYVHNVRRVQIEQLSPTFWRVVASYGWRETLNVEEVFHRCGLEGLSCRMMETSFFMSHESLIVGKRPWYLRLRGKLYLLLQRNALRAPDQFEIPPNRVIELGTQVEI.

Helical transmembrane passes span 9 to 29 (LPAI…TSPL), 49 to 69 (VFGF…IKYL), 103 to 123 (VIMG…TPAI), 137 to 157 (PQLD…LFMI), 165 to 185 (VGKL…VLGL), 213 to 233 (VSFI…ALYA), 247 to 267 (WFTV…ALLL), 276 to 296 (PFFL…AALA), 337 to 357 (IYIP…IVSF), 363 to 383 (LAAA…ILST), 396 to 416 (FVAL…SANL), and 419 to 439 (LLSG…IMTT).

Belongs to the HAK/KUP transporter (TC 2.A.72) family.

Its subcellular location is the cell inner membrane. It catalyses the reaction K(+)(in) + H(+)(in) = K(+)(out) + H(+)(out). Responsible for the low-affinity transport of potassium into the cell. Likely operates as a K(+):H(+) symporter. In Salmonella typhi, this protein is Low affinity potassium transport system protein Kup.